A 429-amino-acid polypeptide reads, in one-letter code: MSSIQASRGTRDILPEEIVYWQRVEAMARQILQRAAYQEIRTPMFEQTALFERGIGEATDIVGKEMYTFLDRGERSLTLRPEGTAGVVRALIEHKLFAQGGVQRLWYTGPMFRYERPQAGRQRQFHQLGVEVLGSADPRADAEVIAIATDLLQQLRLTDWTLMLNSVGNQEDRQRYRQALVDYLTPYQAELDPDSQERLHRNPLRILDSKDQRTQEICQQAPQILNYLGETSRQHFDRVQQSLTDLGIPYELNHRLVRGLDYYTHTAFEFQTTELGAQATVCGGGRYDRLVTELGGPDTPAVGWAIGLERLILLLQHQNISYEAKPDFYLVAKGEVAEPQALILAQKLRHHGFVVELDLSGSAFGKQLKRADRSGAPLCLILGDAEAEAQTVQLKWLASGEQEVLSQTDLLDRSNLLRQKIADSYSLKT.

This sequence belongs to the class-II aminoacyl-tRNA synthetase family. Homodimer.

It localises to the cytoplasm. The catalysed reaction is tRNA(His) + L-histidine + ATP = L-histidyl-tRNA(His) + AMP + diphosphate + H(+). In Cyanothece sp. (strain PCC 7425 / ATCC 29141), this protein is Histidine--tRNA ligase.